A 231-amino-acid chain; its full sequence is Probable septum site-determining protein MinC (231 aa).

Residues 101–125 form a disordered region; it reads GKEKAPRPAPTPQAPAQNTTPVTKT. Low complexity predominate over residues 114 to 123; sequence APAQNTTPVT.

It belongs to the MinC family. As to quaternary structure, interacts with MinD and FtsZ.

Cell division inhibitor that blocks the formation of polar Z ring septums. Rapidly oscillates between the poles of the cell to destabilize FtsZ filaments that have formed before they mature into polar Z rings. Prevents FtsZ polymerization. This Escherichia coli (strain ATCC 8739 / DSM 1576 / NBRC 3972 / NCIMB 8545 / WDCM 00012 / Crooks) protein is Probable septum site-determining protein MinC.